Here is a 360-residue protein sequence, read N- to C-terminus: Peptide chain release factor 1 (360 aa).

Position 235 is an N5-methylglutamine (glutamine 235).

The protein belongs to the prokaryotic/mitochondrial release factor family. Post-translationally, methylated by PrmC. Methylation increases the termination efficiency of RF1.

Its subcellular location is the cytoplasm. Peptide chain release factor 1 directs the termination of translation in response to the peptide chain termination codons UAG and UAA. This chain is Peptide chain release factor 1, found in Burkholderia vietnamiensis (strain G4 / LMG 22486) (Burkholderia cepacia (strain R1808)).